We begin with the raw amino-acid sequence, 83 residues long: Small ribosomal subunit protein bS16 (83 aa).

It belongs to the bacterial ribosomal protein bS16 family.

This is Small ribosomal subunit protein bS16 from Herminiimonas arsenicoxydans.